The chain runs to 289 residues: ATP synthase subunit a (289 aa).

Transmembrane regions (helical) follow at residues 43–63 (AFHLDTLGWSVALGLIFVLIF), 104–124 (IAPLALTIFVWVFLMNAVDLI), 160–180 (LSVFALIIFYSIKVKGIGGFI), 193–213 (IFVQALLIPVNFLLEFVTLIA), 232–252 (VFILIAVMFGSGLLWLSGLGV), and 259–279 (AVFHILIITLQAFIFMMLTIV).

The protein belongs to the ATPase A chain family. In terms of assembly, F-type ATPases have 2 components, CF(1) - the catalytic core - and CF(0) - the membrane proton channel. CF(1) has five subunits: alpha(3), beta(3), gamma(1), delta(1), epsilon(1). CF(0) has three main subunits: a(1), b(2) and c(9-12). The alpha and beta chains form an alternating ring which encloses part of the gamma chain. CF(1) is attached to CF(0) by a central stalk formed by the gamma and epsilon chains, while a peripheral stalk is formed by the delta and b chains.

Its subcellular location is the cell inner membrane. Key component of the proton channel; it plays a direct role in the translocation of protons across the membrane. The sequence is that of ATP synthase subunit a from Pseudomonas fluorescens (strain SBW25).